Here is a 336-residue protein sequence, read N- to C-terminus: tRNA N6-adenosine threonylcarbamoyltransferase (336 aa).

The Fe cation site is built by His111, His115, and Tyr132. Residues 132 to 136 (YLSGG), Asp164, Asp185, and Ser264 contribute to the substrate site. Asp292 is a binding site for Fe cation.

Belongs to the KAE1 / TsaD family. Fe(2+) serves as cofactor.

The protein resides in the cytoplasm. It catalyses the reaction L-threonylcarbamoyladenylate + adenosine(37) in tRNA = N(6)-L-threonylcarbamoyladenosine(37) in tRNA + AMP + H(+). Functionally, required for the formation of a threonylcarbamoyl group on adenosine at position 37 (t(6)A37) in tRNAs that read codons beginning with adenine. Is probably involved in the transfer of the threonylcarbamoyl moiety of threonylcarbamoyl-AMP (TC-AMP) to the N6 group of A37. In Sulfurisphaera tokodaii (strain DSM 16993 / JCM 10545 / NBRC 100140 / 7) (Sulfolobus tokodaii), this protein is tRNA N6-adenosine threonylcarbamoyltransferase.